Consider the following 208-residue polypeptide: MSSRKKNILKVIILGDSGVGKTSLMHRYVNDKYSQQYKATIGADFLTKEVTVDGDKVATMQVWDTAGQERFQSLGVAFYRGADCCVLVYDVTNASSFENIKSWRDEFLVHANVNSPETFPFVILGNKIDAEESKKIVSEKSAQELAKSLGDIPLFLTSAKNAINVDTAFEEIARSALQQNQADTEAFEDDYNDAINIRLDGENNSCSC.

GTP is bound by residues Ser-17–Ser-23, Tyr-33–Thr-40, Gly-67, and Asn-126–Asp-129. The Effector region motif lies at Tyr-37–Phe-45. Lys-147 participates in a covalent cross-link: Glycyl lysine isopeptide (Lys-Gly) (interchain with G-Cter in ubiquitin). Position 158–160 (Ser-158–Lys-160) interacts with GTP. 2 S-geranylgeranyl cysteine lipidation sites follow: Cys-206 and Cys-208. Cys-208 is subject to Cysteine methyl ester.

The protein belongs to the small GTPase superfamily. Rab family. As to quaternary structure, interacts with IVY1. Interacts with YIF1, YIP4 and YIP5. Interacts with the HOPS complex. Interacts with the class C-Vps complex. Interacts with VPS35. Interacts with VPS39. Interacts with the GDP dissociation inhibitor GDI1. Interacts with CCZ1.

The protein localises to the late endosome. It localises to the vacuole membrane. With respect to regulation, rab activation is generally mediated by a guanine exchange factor (GEF), while inactivation through hydrolysis of bound GTP is catalyzed by a GTPase activating protein (GAP). YPT7 is activated by GEFs MON1-CCZ1 complex (MC1) and VAM6/VPS39, and inactivated by GAPs GYP7 and GYP1. In terms of biological role, ypt/Rab-type GTPases are key regulators of membrane trafficking and intracellular vesicular transport. They act as molecular switches that convert between GTP-bound and GDP-bound states, and regulate virtually all steps of membrane traffic from the formation of the transport vesicle at the donor membrane to its fusion at the target membrane. In the GDP-bound state, Ypt proteins are predominantly cytosolic, solubilized through the interaction with a GDP dissociation inhibitor (GDI). In the GTP-bound state, the proteins are membrane bound and interact with specific effector proteins that select cargo, promote vesicle movement, or verify the correct site of fusion. Involved in regulation of vesicular protein transport in exo- and endocytosis. Involved in regulation of late endosome to vacuole trafficking and homotypic vacuole fusion, by interacting in its GTP-bound state on the donor membrane with the large multiprotein HOPS/class C-Vps tethering complex on the acceptor membrane. Involved in retromer assembly and cargo export, recognizing the cargo selection complex (CSC). GTP-bound YPT7 recruits CSC to vacuolar membranes via retromer subunit VPS35. Interacts with the HOPS complex subunit VPS39 independent of the HOPS complex at mitochondria-vacuole contact sites (vCLAMPs), providing a physical and metabolic interconnection between the endocytic pathway and mitochondria. The polypeptide is Ypt/Rab-type GTPase YPT7 (YPT7) (Saccharomyces cerevisiae (strain ATCC 204508 / S288c) (Baker's yeast)).